We begin with the raw amino-acid sequence, 1415 residues long: Uveal autoantigen with coiled-coil domains and ankyrin repeats (1415 aa).

5 ANK repeats span residues 69-98 (EGRS…DITT), 102-131 (AGRN…PTEH), 135-164 (QGRT…SVNA), 168-197 (DGRT…EINS), and 201-230 (QNRT…DVSL). The stretch at 288–376 (VKSSQREHRN…TIESLKNRFK (89 aa)) forms a coiled coil. The ANK 6 repeat unit spans residues 617–646 (ELLAKLTLSVPTEKFESMKSLLSSEVNEKV). A coiled-coil region spans residues 759-1381 (TVEELKKQLL…TDRQHQEVIA (623 aa)). Residue Lys-1034 forms a Glycyl lysine isopeptide (Lys-Gly) (interchain with G-Cter in SUMO2) linkage. Residues 1186–1201 (LREKEEESQNKTEEVS) show a composition bias toward basic and acidic residues. The disordered stretch occupies residues 1186-1205 (LREKEEESQNKTEEVSKLQS).

As to quaternary structure, component of the apoptosome complex, composed of APAF1, pro-caspase-9 and UACA. In the complex, it probably interacts directly with APAF1. Interacts with LGALS3, ARF6 and ACTB. Interacts with RAB39A. Highly expressed in adrenal, testis, kidney and large intestine.

The protein resides in the nucleus. Its subcellular location is the cytoplasm. The protein localises to the cytoskeleton. Its function is as follows. Regulates APAF1 expression and plays an important role in the regulation of stress-induced apoptosis. Promotes apoptosis by regulating three pathways, apoptosome up-regulation, LGALS3/galectin-3 down-regulation and NF-kappa-B inactivation. Regulates the redistribution of APAF1 into the nucleus after proapoptotic stress. Down-regulates the expression of LGALS3 by inhibiting NFKB1. Modulates isoactin dynamics to regulate the morphological alterations required for cell growth and motility. Interaction with ARF6 may modulate cell shape and motility after injury. May be involved in multiple neurite formation. The chain is Uveal autoantigen with coiled-coil domains and ankyrin repeats (UACA) from Canis lupus familiaris (Dog).